The following is a 292-amino-acid chain: AKT-interacting protein (292 aa).

The segment at 1-63 (MNPLWSMSAG…TSPAPAAQST (63 aa)) is disordered. A compositionally biased stretch (basic and acidic residues) spans 14 to 23 (KRAEGEEKTL). Ser30 is subject to Phosphoserine. A UBC core domain is found at 74-222 (YLEYSLLAEF…VVDSVKVCTA (149 aa)).

The protein belongs to the ubiquitin-conjugating enzyme family. FTS subfamily. In terms of assembly, component of the FTS/Hook/FHIP complex (FHF complex), composed of AKTIP/FTS, FHIP1B, and one or more members of the Hook family of proteins HOOK1, HOOK2, and HOOK3. Interacts directly with HOOK1, HOOK2 and HOOK3. The FHF complex associates with the homotypic vesicular sorting complex (the HOPS complex). Also interacts with AKT1. May interact with FHIP1A. As to expression, ubiquitous. Highest expression in kidney, testis and brain and lowest in spleen and liver.

The protein resides in the cytoplasm. The protein localises to the cell membrane. In terms of biological role, component of the FTS/Hook/FHIP complex (FHF complex). The FHF complex may function to promote vesicle trafficking and/or fusion via the homotypic vesicular protein sorting complex (the HOPS complex). Regulates apoptosis by enhancing phosphorylation and activation of AKT1. Increases release of TNFSF6 via the AKT1/GSK3B/NFATC1 signaling cascade. FHF complex promotes the distribution of AP-4 complex to the perinuclear area of the cell. The polypeptide is AKT-interacting protein (Aktip) (Mus musculus (Mouse)).